Consider the following 703-residue polypeptide: Phosphoribosylformylglycinamidine synthase subunit PurL (703 aa).

H36 is an active-site residue. The ATP site is built by Y39 and K80. E82 is a binding site for Mg(2+). Residues 83–86 (SHNH) and R105 each bind substrate. Residue H84 is the Proton acceptor of the active site. D106 is a Mg(2+) binding site. Q226 provides a ligand contact to substrate. Position 252 (D252) interacts with Mg(2+). 294 to 296 (ETQ) serves as a coordination point for substrate. ATP is bound by residues D468 and G505. S508 lines the substrate pocket.

It belongs to the FGAMS family. Monomer. Part of the FGAM synthase complex composed of 1 PurL, 1 PurQ and 2 PurS subunits.

It localises to the cytoplasm. The enzyme catalyses N(2)-formyl-N(1)-(5-phospho-beta-D-ribosyl)glycinamide + L-glutamine + ATP + H2O = 2-formamido-N(1)-(5-O-phospho-beta-D-ribosyl)acetamidine + L-glutamate + ADP + phosphate + H(+). It functions in the pathway purine metabolism; IMP biosynthesis via de novo pathway; 5-amino-1-(5-phospho-D-ribosyl)imidazole from N(2)-formyl-N(1)-(5-phospho-D-ribosyl)glycinamide: step 1/2. Its function is as follows. Part of the phosphoribosylformylglycinamidine synthase complex involved in the purines biosynthetic pathway. Catalyzes the ATP-dependent conversion of formylglycinamide ribonucleotide (FGAR) and glutamine to yield formylglycinamidine ribonucleotide (FGAM) and glutamate. The FGAM synthase complex is composed of three subunits. PurQ produces an ammonia molecule by converting glutamine to glutamate. PurL transfers the ammonia molecule to FGAR to form FGAM in an ATP-dependent manner. PurS interacts with PurQ and PurL and is thought to assist in the transfer of the ammonia molecule from PurQ to PurL. The sequence is that of Phosphoribosylformylglycinamidine synthase subunit PurL from Sulfurisphaera tokodaii (strain DSM 16993 / JCM 10545 / NBRC 100140 / 7) (Sulfolobus tokodaii).